The primary structure comprises 453 residues: Probable acetylornithine aminotransferase, mitochondrial (453 aa).

Residue K302 is modified to N6-(pyridoxal phosphate)lysine.

Belongs to the class-III pyridoxal-phosphate-dependent aminotransferase family. Requires pyridoxal 5'-phosphate as cofactor.

The protein resides in the mitochondrion matrix. It carries out the reaction N(2)-acetyl-L-ornithine + 2-oxoglutarate = N-acetyl-L-glutamate 5-semialdehyde + L-glutamate. It functions in the pathway amino-acid biosynthesis; L-arginine biosynthesis; N(2)-acetyl-L-ornithine from L-glutamate: step 4/4. The polypeptide is Probable acetylornithine aminotransferase, mitochondrial (argD) (Dictyostelium discoideum (Social amoeba)).